The chain runs to 72 residues: Large ribosomal subunit protein bL31 (72 aa).

Residues Cys16, Cys18, Cys37, and Cys40 each contribute to the Zn(2+) site.

Belongs to the bacterial ribosomal protein bL31 family. Type A subfamily. Part of the 50S ribosomal subunit. Requires Zn(2+) as cofactor.

Binds the 23S rRNA. The chain is Large ribosomal subunit protein bL31 from Buchnera aphidicola subsp. Acyrthosiphon pisum (strain Tuc7).